A 71-amino-acid chain; its full sequence is Beta-defensin 25 (71 aa).

The N-terminal stretch at 1–22 (MAKWILLIVALLVLGHVPSGST) is a signal peptide. Cystine bridges form between Cys-27–Cys-54, Cys-34–Cys-48, and Cys-38–Cys-55.

It belongs to the beta-defensin family.

The protein localises to the secreted. Functionally, has antibacterial activity. In Rattus norvegicus (Rat), this protein is Beta-defensin 25 (Defb25).